Here is a 304-residue protein sequence, read N- to C-terminus: CBY1-interacting BAR domain-containing protein 2 (304 aa).

The segment at 6–217 (SRDSQVRVME…EKYDLERDLL (212 aa)) is BAR-like.

This sequence belongs to the CIBAR family. In terms of assembly, homodimer (via BAR-like domain). Heterodimer (via BAR-like domain) with FAM92A. Interacts with CBY1. In terms of tissue distribution, restricted to certain tissues, most prominently expressed in multicilaited tissues.

The protein resides in the cytoplasm. Its subcellular location is the cytoskeleton. It localises to the microtubule organizing center. It is found in the centrosome. The protein localises to the centriole. The protein resides in the cilium basal body. Its function is as follows. May play a role in ciliogenesis. In cooperation with CBY1 may facilitate ciliogenesis likely by the recruitment and fusion of endosomal vesicles at distal appendages during early stages of ciliogenesis. The sequence is that of CBY1-interacting BAR domain-containing protein 2 from Homo sapiens (Human).